The primary structure comprises 70 residues: Large ribosomal subunit protein bL31c (70 aa).

The protein belongs to the bacterial ribosomal protein bL31 family. Type A subfamily. In terms of assembly, part of the 50S ribosomal subunit.

The protein localises to the plastid. Its subcellular location is the chloroplast. In terms of biological role, binds the 23S rRNA. This chain is Large ribosomal subunit protein bL31c, found in Pyropia yezoensis (Susabi-nori).